The chain runs to 286 residues: Small ribosomal subunit protein uS15m (286 aa).

The transit peptide at 1–33 (MSIVGRNAILNLRISLCPLFMGKRSFVSSPVSN) directs the protein to the mitochondrion.

This sequence belongs to the universal ribosomal protein uS15 family. As to quaternary structure, component of the mitochondrial small ribosomal subunit (mt-SSU). Mature yeast 74S mitochondrial ribosomes consist of a small (37S) and a large (54S) subunit. The 37S small subunit contains a 15S ribosomal RNA (15S mt-rRNA) and 34 different proteins. The 54S large subunit contains a 21S rRNA (21S mt-rRNA) and 46 different proteins. In terms of processing, the precursor is processed in two steps involving mitochondrial intermediate peptidase (MIP) and mitochondrial processing peptidase (MPP).

The protein localises to the mitochondrion. Functionally, component of the mitochondrial ribosome (mitoribosome), a dedicated translation machinery responsible for the synthesis of mitochondrial genome-encoded proteins, including at least some of the essential transmembrane subunits of the mitochondrial respiratory chain. The mitoribosomes are attached to the mitochondrial inner membrane and translation products are cotranslationally integrated into the membrane. This chain is Small ribosomal subunit protein uS15m (MRPS28), found in Saccharomyces cerevisiae (strain ATCC 204508 / S288c) (Baker's yeast).